Here is an 808-residue protein sequence, read N- to C-terminus: Homeobox-leucine zipper protein HDG1 (808 aa).

Residues 57–121 (LQTNGEMSRN…KRYHRHTPKQ (65 aa)) form a disordered region. Positions 79-90 (SRGEDVESRSES) are enriched in basic and acidic residues. Basic residues predominate over residues 108–119 (LKKKKRYHRHTP). A DNA-binding region (homeobox) is located at residues 110 to 169 (KKKRYHRHTPKQIQDLESVFKECAHPDEKQRLDLSRRLNLDPRQVKFWFQNRRTQMKTQI). Residues 158-233 (FQNRRTQMKT…SRLKDELDRV (76 aa)) are a coiled coil. Residues 310-541 (DFDQRSRYLD…LQRQCECLTI (232 aa)) form the START domain.

Belongs to the HD-ZIP homeobox family. Class IV subfamily. As to quaternary structure, interacts with CFL1. Binds with BBM. As to expression, expressed in trichomes forming at the base of young leaves, in endodermal cell lines around emergent lateral roots and in the epidermal layer of the stamen filament.

The protein resides in the nucleus. Its function is as follows. Probable transcription factor. Promotes cuticle development probably by modulating the expression of the downstream genes BDG and FDH, possibly repressed in a CFL1-dependent manner. Involved, together with PDF2, in the regulation of flower organs development by promoting the expression of APETALA 3 (AP3) in the epidermis and internal cell layers of developing flowers. In opposition to BBM, seems to promote cell differentiation and giant cell identity via transcriptional repression of meristem and cell proliferation genes. The protein is Homeobox-leucine zipper protein HDG1 of Arabidopsis thaliana (Mouse-ear cress).